A 380-amino-acid polypeptide reads, in one-letter code: Chaperone protein DnaJ (380 aa).

The J domain maps to 5–70; it reads DFYETLGVSK…QKRAAYDRFG (66 aa). Residues 141 to 219 form a CR-type zinc finger; that stretch reads GKTAQIRVPT…CHGQGRVTEE (79 aa). Zn(2+) is bound by residues C154, C157, C171, C174, C193, C196, C207, and C210. CXXCXGXG motif repeat units lie at residues 154–161, 171–178, 193–200, and 207–214; these read CEVCSGSG, CATCQGSG, CPTCQGRG, and CGKCHGQG.

Belongs to the DnaJ family. Homodimer. Zn(2+) is required as a cofactor.

Its subcellular location is the cytoplasm. In terms of biological role, participates actively in the response to hyperosmotic and heat shock by preventing the aggregation of stress-denatured proteins and by disaggregating proteins, also in an autonomous, DnaK-independent fashion. Unfolded proteins bind initially to DnaJ; upon interaction with the DnaJ-bound protein, DnaK hydrolyzes its bound ATP, resulting in the formation of a stable complex. GrpE releases ADP from DnaK; ATP binding to DnaK triggers the release of the substrate protein, thus completing the reaction cycle. Several rounds of ATP-dependent interactions between DnaJ, DnaK and GrpE are required for fully efficient folding. Also involved, together with DnaK and GrpE, in the DNA replication of plasmids through activation of initiation proteins. The polypeptide is Chaperone protein DnaJ (Allorhizobium ampelinum (strain ATCC BAA-846 / DSM 112012 / S4) (Agrobacterium vitis (strain S4))).